A 109-amino-acid chain; its full sequence is Small ribosomal subunit protein bS20 (109 aa).

The segment at 1 to 26 (MANIKSAKKRAIQSEKRRKHNASRRS) is disordered.

This sequence belongs to the bacterial ribosomal protein bS20 family.

In terms of biological role, binds directly to 16S ribosomal RNA. The polypeptide is Small ribosomal subunit protein bS20 (Hamiltonella defensa subsp. Acyrthosiphon pisum (strain 5AT)).